A 406-amino-acid chain; its full sequence is Probable tRNA pseudouridine synthase D (406 aa).

Aspartate 77 acts as the Nucleophile in catalysis. Residues 150–371 form the TRUD domain; that stretch reads GFPNYFGIQR…PGGRRELLIK (222 aa).

Belongs to the pseudouridine synthase TruD family.

The enzyme catalyses uridine(13) in tRNA = pseudouridine(13) in tRNA. Functionally, could be responsible for synthesis of pseudouridine from uracil-13 in transfer RNAs. The polypeptide is Probable tRNA pseudouridine synthase D (Pyrococcus abyssi (strain GE5 / Orsay)).